The following is a 439-amino-acid chain: Lipid-A-disaccharide synthase (439 aa).

This sequence belongs to the LpxB family.

The enzyme catalyses a lipid X + a UDP-2-N,3-O-bis[(3R)-3-hydroxyacyl]-alpha-D-glucosamine = a lipid A disaccharide + UDP + H(+). It functions in the pathway bacterial outer membrane biogenesis; LPS lipid A biosynthesis. Functionally, condensation of UDP-2,3-diacylglucosamine and 2,3-diacylglucosamine-1-phosphate to form lipid A disaccharide, a precursor of lipid A, a phosphorylated glycolipid that anchors the lipopolysaccharide to the outer membrane of the cell. The protein is Lipid-A-disaccharide synthase of Xanthomonas axonopodis pv. citri (strain 306).